Consider the following 227-residue polypeptide: (S)-2-haloacid dehalogenase (227 aa).

Asp-10 functions as the Nucleophile in the catalytic mechanism. An (S)-2-haloacid is bound by residues 11-12 (LY), Arg-41, and 118-119 (SN). The important for catalytic activity stretch occupies residues 175–180 (SSNAWD).

It belongs to the HAD-like hydrolase superfamily. S-2-haloalkanoic acid dehalogenase family.

It carries out the reaction an (S)-2-haloacid + H2O = a (2R)-2-hydroxycarboxylate + a halide anion + H(+). It catalyses the reaction (S)-2-chloropropanoate + H2O = (R)-lactate + chloride + H(+). Catalyzes the hydrolytic dehalogenation of small (S)-2-haloalkanoic acids to yield the corresponding (R)-2-hydroxyalkanoic acids. Acts on acids of short chain lengths, C(2) to C(4), with inversion of configuration at C-2. Active with 2-halogenated carboxylic acids and converts only the S-isomer (or L-isomer) of 2-chloropropionic acid with inversion of configuration to produce R-lactate (or D-isomer). The sequence is that of (S)-2-haloacid dehalogenase (dhl VII) from Pseudomonas fluorescens.